A 542-amino-acid chain; its full sequence is MTVMEHTKAATIDLTKHGLHNVKEVVRNPSYEMLFEEETRADLTGYERGVVTELGAVAVDTGIFTGRSPKDKYIVKDATTEEHMWWTSDAVKNDNKPINKEVWDDLKELVTNQLSGKRLFVIDGYCGANPDTRLSIRVITEVAWQAHFVKNMFIRPTEEELATFEPDFVVMNGAKCTNDKWEEQGLNSENFTVFNLTERTQLIGGTWYGGEMKKGMFAMMNYFLPLKDIASMHCSANMGEEGDVAIFFGLSGTGKTTLSTDPKRALIGDDEHGWDDDGVFNFEGGCYAKTIKLSKEAEPDIYNAIRRDALLENVTVRSDGSIDFDDGSKTENTRVSYPLYHIDNIVKPVSKGGHANKVIFLSADAFGVLPPVSKLTPEQTKYHFLSGFTAKLAGTERGITEPTPTFSACFGAAFLTLHPTKYAEVLVKRMEAAGAEAYLVNTGWNGSGKRISIQDTRGIIDAILDGSIEDAKTKHIPIFNLEVPTSLPGVDPSILDPRDTYVDPLQWESKAKDLAERFINNFDKYTDNAEGKSLVAAGPQLD.

Substrate contacts are provided by R67, Y208, and K214. ATP is bound by residues K214, H233, and 249-257; that span reads GLSGTGKTT. Mn(2+) is bound by residues K214 and H233. D270 contributes to the Mn(2+) binding site. Residues E298, R334, 450-451, and T456 each bind ATP; that span reads RI. Residue R334 coordinates substrate.

Belongs to the phosphoenolpyruvate carboxykinase (ATP) family. As to quaternary structure, monomer. It depends on Mn(2+) as a cofactor.

The protein localises to the cytoplasm. The catalysed reaction is oxaloacetate + ATP = phosphoenolpyruvate + ADP + CO2. The protein operates within carbohydrate biosynthesis; gluconeogenesis. In terms of biological role, involved in the gluconeogenesis. Catalyzes the conversion of oxaloacetate (OAA) to phosphoenolpyruvate (PEP) through direct phosphoryl transfer between the nucleoside triphosphate and OAA. The protein is Phosphoenolpyruvate carboxykinase (ATP) of Vibrio campbellii (strain ATCC BAA-1116).